We begin with the raw amino-acid sequence, 234 residues long: Large ribosomal subunit protein uL1 (234 aa).

The protein belongs to the universal ribosomal protein uL1 family. As to quaternary structure, part of the 50S ribosomal subunit.

Its function is as follows. Binds directly to 23S rRNA. The L1 stalk is quite mobile in the ribosome, and is involved in E site tRNA release. In terms of biological role, protein L1 is also a translational repressor protein, it controls the translation of the L11 operon by binding to its mRNA. This Klebsiella pneumoniae (strain 342) protein is Large ribosomal subunit protein uL1.